Consider the following 425-residue polypeptide: Peroxisomal membrane protein PEX14 (425 aa).

2 disordered regions span residues 49–89 and 247–425; these read RSQG…YRNA and DEPI…AAQS. Residues 56–76 show a composition bias toward low complexity; the sequence is SSSVASQVSSYSPSASQSSVA. The short motif at 89–97 is the SH3-binding element; it reads APPLPERDW. A compositionally biased stretch (polar residues) spans 256-297; that stretch reads PSLTTGANSLTSESSGRSSIPHSQSVPIRTQLTTPPSDSDTS. 2 stretches are compositionally biased toward basic and acidic residues: residues 315 to 324 and 333 to 366; these read DILRKEKNRT and LGKD…PEED.

It belongs to the peroxin-14 family. Interacts with PEX13 (via SH3 domain); forming the PEX13-PEX14 docking complex. Interacts with PEX5 (via WxxxF/Y motifs). Interacts with PEX20 (via WxxxF/Y motifs). Interacts with PEX3, PEX7, PEX8 and PEX17. Phosphorylated on serine or threonine residues.

The protein resides in the peroxisome membrane. Functionally, component of the PEX13-PEX14 docking complex, a translocon channel that specifically mediates the import of peroxisomal cargo proteins bound to PEX5 or PEX20 receptors. The PEX13-PEX14 docking complex forms a large import pore which can be opened to a diameter of about 9 nm. Mechanistically, PEX5 (or PEX20) receptor along with cargo proteins associates with the PEX14 subunit of the PEX13-PEX14 docking complex in the cytosol, leading to the insertion of the receptor into the organelle membrane with the concomitant translocation of the cargo into the peroxisome matrix. The chain is Peroxisomal membrane protein PEX14 from Komagataella pastoris (Yeast).